The following is a 390-amino-acid chain: Chorismate synthase (390 aa).

NADP(+)-binding residues include Arg-39 and Arg-45. FMN is bound by residues 132-134, 253-254, Gly-298, 313-317, and Arg-339; these read RSS, NA, and KPIPT.

Belongs to the chorismate synthase family. In terms of assembly, homotetramer. FMNH2 serves as cofactor.

The enzyme catalyses 5-O-(1-carboxyvinyl)-3-phosphoshikimate = chorismate + phosphate. It functions in the pathway metabolic intermediate biosynthesis; chorismate biosynthesis; chorismate from D-erythrose 4-phosphate and phosphoenolpyruvate: step 7/7. Functionally, catalyzes the anti-1,4-elimination of the C-3 phosphate and the C-6 proR hydrogen from 5-enolpyruvylshikimate-3-phosphate (EPSP) to yield chorismate, which is the branch point compound that serves as the starting substrate for the three terminal pathways of aromatic amino acid biosynthesis. This reaction introduces a second double bond into the aromatic ring system. This Bacillus licheniformis (strain ATCC 14580 / DSM 13 / JCM 2505 / CCUG 7422 / NBRC 12200 / NCIMB 9375 / NCTC 10341 / NRRL NRS-1264 / Gibson 46) protein is Chorismate synthase.